A 505-amino-acid chain; its full sequence is Kelch-like protein 42 (505 aa).

The 74-residue stretch at 5 to 78 (EMVQIRLEDR…INAGGAREGW (74 aa)) folds into the BTB domain. Serine 43 carries the post-translational modification Phosphoserine. Kelch repeat units follow at residues 176–234 (PGDV…PLAN), 235–282 (NLPP…NEWL), 284–325 (VASM…DAWN), 327–372 (VAPL…DMWT), 374–429 (FETC…RQWL), and 431–480 (LKEN…DSWE).

As to quaternary structure, component of the BCR(KLHL42) E3 ubiquitin ligase complex, at least composed of CUL3 and KLHL42. Interacts (via the BTB domain) with CUL3. Interacts (via the kelch domains) with KATNA1.

The protein localises to the cytoplasm. It is found in the cytoskeleton. The protein resides in the spindle. It participates in protein modification; protein ubiquitination. Substrate-specific adapter of a BCR (BTB-CUL3-RBX1) E3 ubiquitin-protein ligase complex required for mitotic progression and cytokinesis. The BCR(KLHL42) E3 ubiquitin ligase complex mediates the ubiquitination and subsequent degradation of KATNA1. Involved in microtubule dynamics throughout mitosis. This chain is Kelch-like protein 42 (KLHL42), found in Homo sapiens (Human).